Reading from the N-terminus, the 451-residue chain is Spermidine sinapoyl-CoA acyltransferase (451 aa).

Spermidine is bound by residues Tyr47, His169, Ser294, Asp316, and Leu378. Residue His169 is the Proton acceptor of the active site. Residue Asp391 is the Proton acceptor of the active site.

Belongs to the plant acyltransferase family. As to quaternary structure, monomer. In terms of tissue distribution, predominantly expressed in siliques, especially in seeds around the embryo, and, at low levels, in flowers. Barely detectable in stems, leaves, and roots.

The catalysed reaction is 2 (E)-sinapoyl-CoA + spermidine = N(1),N(8)-bis[(E)-sinapoyl]-spermidine + 2 CoA + 2 H(+). Its pathway is amine and polyamine metabolism; spermidine metabolism. Functionally, spermidine sinapoyl-CoA acyltransferase that mediates the accumulation of disinapoyl spermidine conjugates in seeds. Catalyzes the two conjugating steps required for the biosynthesis of N1,N8-disipanoyl-spermidine. Can also use putrescine as an acyl acceptor to convert it into monosinapoyl-putrescine. The polypeptide is Spermidine sinapoyl-CoA acyltransferase (Arabidopsis thaliana (Mouse-ear cress)).